A 552-amino-acid chain; its full sequence is Probable protein kinase UbiB (552 aa).

Residues 22-42 (LLPANLPLAATLLLLPFKLFP) traverse the membrane as a helical segment. Positions 118-498 (SFNIEPLASA…QQLARQRNRR (381 aa)) constitute a Protein kinase domain. ATP is bound by residues 124–132 (LASASVAQV) and K146. D281 acts as the Proton acceptor in catalysis. A run of 2 helical transmembrane segments spans residues 501-521 (ITLL…GEGI) and 530-550 (FGDI…AWLL).

Belongs to the ABC1 family. UbiB subfamily.

Its subcellular location is the cell inner membrane. Its pathway is cofactor biosynthesis; ubiquinone biosynthesis [regulation]. Functionally, is probably a protein kinase regulator of UbiI activity which is involved in aerobic coenzyme Q (ubiquinone) biosynthesis. The polypeptide is Probable protein kinase UbiB (Cellvibrio japonicus (strain Ueda107) (Pseudomonas fluorescens subsp. cellulosa)).